The following is a 509-amino-acid chain: MGCGCSSHPEDDWMENIDVCENCHYPIVPLDGKGTLLIRNGSEVRDPLVTYEGSNPPASPLQDNLVIALHSYEPSHDGDLGFEKGEQLRILEQSGEWWKAQSLTTGQEGFIPFNFVAKANSLEPEPWFFKNLSRKDAERQLLAPGNTHGSFLIRESESTAGSFSLSVRDFDQNQGEVVKHYKIRNLDNGGFYISPRITFPGLHELVRHYTNASDGLCTRLSRPCQTQKPQKPWWEDEWEVPRETLKLVERLGAGQFGEVWMGYYNGHTKVAVKSLKQGSMSPDAFLAEANLMKQLQHQRLVRLYAVVTQEPIYIITEYMENGSLVDFLKTPSGIKLTINKLLDMAAQIAEGMAFIEERNYIHRDLRAANILVSDTLSCKIADFGLARLIEDNEYTAREGAKFPIKWTAPEAINYGTFTIKSDVWSFGILLTEIVTHGRIPYPGMTNPEVIQNLERGYRMVRPDNCPEELYQLMRLCWKERPEDRPTFDYLRSVLEDFFTATEGQYQPQP.

Gly-2 carries the N-myristoyl glycine lipid modification. The interactions with CD4 and CD8 stretch occupies residues 2-72 (GCGCSSHPED…DNLVIALHSY (71 aa)). Residues Cys-3 and Cys-5 are each lipidated (S-palmitoyl cysteine). The SH3 domain maps to 61-121 (LQDNLVIALH…PFNFVAKANS (61 aa)). A Glycyl lysine isopeptide (Lys-Gly) (interchain with G-Cter in ubiquitin) cross-link involves residue Lys-99. At Ser-102 the chain carries Phosphoserine. An SH2 domain is found at 127-224 (WFFKNLSRKD…GLCTRLSRPC (98 aa)). Residues 154-242 (RESESTAGSF…WWEDEWEVPR (89 aa)) are interaction with PTPRH. Thr-159 bears the Phosphothreonine mark. Position 162 is a phosphoserine (Ser-162). Tyr-192 carries the post-translational modification Phosphotyrosine. At Ser-194 the chain carries Phosphoserine. Residues 245-498 (LKLVERLGAG…YLRSVLEDFF (254 aa)) enclose the Protein kinase domain. ATP contacts are provided by residues 251-259 (LGAGQFGEV) and Lys-273. Lys-276 participates in a covalent cross-link: Glycyl lysine isopeptide (Lys-Gly) (interchain with G-Cter in ubiquitin). The Proton acceptor role is filled by Asp-364. The residue at position 394 (Tyr-394) is a Phosphotyrosine; by autocatalysis. Tyr-505 carries the post-translational modification Phosphotyrosine; by CSK.

Belongs to the protein kinase superfamily. Tyr protein kinase family. SRC subfamily. As to quaternary structure, binds to the cytoplasmic domain of cell surface receptors, such as AXL, CD2, CD4, CD5, CD8, CD44, CD45 and CD122. Also binds to effector molecules, such as PI4K, VAV1, RASA1, FYB1 and to other protein kinases including CDK1, RAF1, ZAP70 and SYK. Binds to phosphatidylinositol 3'-kinase (PI3K) from T-lymphocytes through its SH3 domain and to the tyrosine phosphorylated form of KHDRBS1/p70 through its SH2 domain. This interaction inhibits its tyrosine-kinase activity. Interacts with SQSTM1. Interacts with phosphorylated LIME1. Interacts with CBLB and PTPRH. Interacts with RUNX3. Forms a signaling complex with EPHA1, PTK2B and PI3-KINASE; upon activation by EFNA1 which may regulate T-lymphocyte migration. Associates with ZAP70 and RHOH; these interactions allow LCK-mediated RHOH and CD3 subunit phosphorylation in the presence of functional ZAP70. Interacts with UNC119; this interaction plays a crucial role in activation of LCK. Interacts with CEACAM1 (via cytoplasmic domain); mediates CEACAM1 phosphorylation resulting in PTPN6 recruitment that dephosphorylates TCR stimulation-induced CD247 and ZAP70. Interacts with CD160. Interacts with CD48. In terms of assembly, (Microbial infection) Interacts with herpes simplex virus 1 UL46; this interaction activates LCK. (Microbial infection) Interacts with HIV-1 Nef through its SH3 domain. Autophosphorylated on Tyr-394, increasing enzymatic activity, this site is dephosphorylated by PTN22. Phosphorylated on Tyr-505 by CSK, decreasing activity. Dephosphorylated by PTPRC/CD45. Dephosphorylation at Tyr-394 by PTPN2 negatively regulates T-cell receptor signaling. Dephosphorylation at Tyr-394 by DUSP22 negatively regulates T-cell receptor signaling. In terms of processing, myristoylation is required prior to palmitoylation. Post-translationally, palmitoylation regulates association with the plasma membrane and could be mediated by ZDHHC2. 'Lys-63'-linked ubiquitinated at Lys-99 and Lys-276 by UBR2; this modification is required for autophosphorylation at Tyr-394. In terms of tissue distribution, expressed specifically in lymphoid cells.

The protein resides in the cell membrane. Its subcellular location is the cytoplasm. It is found in the cytosol. The catalysed reaction is L-tyrosyl-[protein] + ATP = O-phospho-L-tyrosyl-[protein] + ADP + H(+). With respect to regulation, the relative activities of the inhibitory tyrosine-protein kinase CSK and the activating tyrosine-protein phosphatase PTPRC/CD45 determine the level of LCK activity. These interactions allow rapid and efficient activation of LCK in response to TCR stimulation. Its function is as follows. Non-receptor tyrosine-protein kinase that plays an essential role in the selection and maturation of developing T-cells in the thymus and in the function of mature T-cells. Plays a key role in T-cell antigen receptor (TCR)-linked signal transduction pathways. Constitutively associated with the cytoplasmic portions of the CD4 and CD8 surface receptors. Association of the TCR with a peptide antigen-bound MHC complex facilitates the interaction of CD4 and CD8 with MHC class II and class I molecules, respectively, thereby recruiting the associated LCK protein to the vicinity of the TCR/CD3 complex. LCK then phosphorylates tyrosine residues within the immunoreceptor tyrosine-based activation motifs (ITAM) of the cytoplasmic tails of the TCR-gamma chains and CD3 subunits, initiating the TCR/CD3 signaling pathway. Once stimulated, the TCR recruits the tyrosine kinase ZAP70, that becomes phosphorylated and activated by LCK. Following this, a large number of signaling molecules are recruited, ultimately leading to lymphokine production. LCK also contributes to signaling by other receptor molecules. Associates directly with the cytoplasmic tail of CD2, which leads to hyperphosphorylation and activation of LCK. Also plays a role in the IL2 receptor-linked signaling pathway that controls the T-cell proliferative response. Binding of IL2 to its receptor results in increased activity of LCK. Is expressed at all stages of thymocyte development and is required for the regulation of maturation events that are governed by both pre-TCR and mature alpha beta TCR. Phosphorylates other substrates including RUNX3, PTK2B/PYK2, the microtubule-associated protein MAPT, RHOH or TYROBP. Interacts with FYB2. This chain is Tyrosine-protein kinase Lck (LCK), found in Homo sapiens (Human).